Reading from the N-terminus, the 351-residue chain is Anthranilate phosphoribosyltransferase (351 aa).

Residues Gly-84, 87–88 (GD), 95–98 (NISS), 113–121 (KHGNRGASS), and Ala-125 contribute to the 5-phospho-alpha-D-ribose 1-diphosphate site. Gly-84 is an anthranilate binding site. Residue Ser-97 coordinates Mg(2+). Position 116 (Asn-116) interacts with anthranilate. Arg-171 serves as a coordination point for anthranilate. 2 residues coordinate Mg(2+): Asp-229 and Lys-230.

This sequence belongs to the anthranilate phosphoribosyltransferase family. Homodimer. Mg(2+) is required as a cofactor.

It carries out the reaction N-(5-phospho-beta-D-ribosyl)anthranilate + diphosphate = 5-phospho-alpha-D-ribose 1-diphosphate + anthranilate. It participates in amino-acid biosynthesis; L-tryptophan biosynthesis; L-tryptophan from chorismate: step 2/5. In terms of biological role, catalyzes the transfer of the phosphoribosyl group of 5-phosphorylribose-1-pyrophosphate (PRPP) to anthranilate to yield N-(5'-phosphoribosyl)-anthranilate (PRA). The polypeptide is Anthranilate phosphoribosyltransferase (Clavibacter sepedonicus (Clavibacter michiganensis subsp. sepedonicus)).